The chain runs to 151 residues: Probable cyclic pyranopterin monophosphate synthase (151 aa).

Substrate is bound by residues 66 to 68 (MCH) and 102 to 103 (ME). D117 is an active-site residue.

The protein belongs to the MoaC family. Homohexamer; trimer of dimers.

The enzyme catalyses (8S)-3',8-cyclo-7,8-dihydroguanosine 5'-triphosphate = cyclic pyranopterin phosphate + diphosphate. The protein operates within cofactor biosynthesis; molybdopterin biosynthesis. Its function is as follows. Catalyzes the conversion of (8S)-3',8-cyclo-7,8-dihydroguanosine 5'-triphosphate to cyclic pyranopterin monophosphate (cPMP). This is Probable cyclic pyranopterin monophosphate synthase from Sulfurisphaera tokodaii (strain DSM 16993 / JCM 10545 / NBRC 100140 / 7) (Sulfolobus tokodaii).